Consider the following 214-residue polypeptide: Phosphatidylserine decarboxylase proenzyme (214 aa).

Residue Ser183 is the Schiff-base intermediate with substrate; via pyruvic acid of the active site. The residue at position 183 (Ser183) is a Pyruvic acid (Ser); by autocatalysis.

Belongs to the phosphatidylserine decarboxylase family. PSD-A subfamily. Heterodimer of a large membrane-associated beta subunit and a small pyruvoyl-containing alpha subunit. Pyruvate serves as cofactor. Is synthesized initially as an inactive proenzyme. Formation of the active enzyme involves a self-maturation process in which the active site pyruvoyl group is generated from an internal serine residue via an autocatalytic post-translational modification. Two non-identical subunits are generated from the proenzyme in this reaction, and the pyruvate is formed at the N-terminus of the alpha chain, which is derived from the carboxyl end of the proenzyme. The post-translation cleavage follows an unusual pathway, termed non-hydrolytic serinolysis, in which the side chain hydroxyl group of the serine supplies its oxygen atom to form the C-terminus of the beta chain, while the remainder of the serine residue undergoes an oxidative deamination to produce ammonia and the pyruvoyl prosthetic group on the alpha chain.

The protein resides in the cell membrane. It catalyses the reaction a 1,2-diacyl-sn-glycero-3-phospho-L-serine + H(+) = a 1,2-diacyl-sn-glycero-3-phosphoethanolamine + CO2. The protein operates within phospholipid metabolism; phosphatidylethanolamine biosynthesis; phosphatidylethanolamine from CDP-diacylglycerol: step 2/2. Functionally, catalyzes the formation of phosphatidylethanolamine (PtdEtn) from phosphatidylserine (PtdSer). This is Phosphatidylserine decarboxylase proenzyme from Desulfotalea psychrophila (strain LSv54 / DSM 12343).